A 134-amino-acid polypeptide reads, in one-letter code: Small ribosomal subunit protein uS9 (134 aa).

A disordered region spans residues 109 to 134 (DARRTEPHKPSKSSKGPRAKRQKSYR). Positions 118-134 (PSKSSKGPRAKRQKSYR) are enriched in basic residues.

This sequence belongs to the universal ribosomal protein uS9 family.

This chain is Small ribosomal subunit protein uS9, found in Methanococcus maripaludis (strain DSM 14266 / JCM 13030 / NBRC 101832 / S2 / LL).